A 370-amino-acid polypeptide reads, in one-letter code: Putative transport protein YdiK (370 aa).

The Periplasmic segment spans residues methionine 1–valine 17. A helical membrane pass occupies residues leucine 18–phenylalanine 38. Residue alanine 39 is a topological domain, cytoplasmic. Residues tryptophan 40–phenylalanine 60 form a helical membrane-spanning segment. Residues glycine 61–leucine 65 lie on the Periplasmic side of the membrane. The helical transmembrane segment at alanine 66–valine 86 threads the bilayer. Over asparagine 87 to threonine 106 the chain is Cytoplasmic. Residues leucine 107–tryptophan 127 form a helical membrane-spanning segment. At histidine 128 to glutamine 156 the chain is on the periplasmic side. A helical transmembrane segment spans residues alanine 157–leucine 177. The Cytoplasmic segment spans residues tyrosine 178 to alanine 213. Residues valine 214–alanine 234 form a helical membrane-spanning segment. The Periplasmic segment spans residues valine 235–methionine 248. The chain crosses the membrane as a helical span at residues isoleucine 249–leucine 269. Topologically, residues tyrosine 270–aspartate 274 are cytoplasmic. Residues threonine 275–isoleucine 295 form a helical membrane-spanning segment. The Periplasmic segment spans residues arginine 296–leucine 308. The helical transmembrane segment at isoleucine 309–isoleucine 329 threads the bilayer. Residues glycine 330 to lysine 370 are Cytoplasmic-facing.

This sequence belongs to the autoinducer-2 exporter (AI-2E) (TC 2.A.86) family.

It localises to the cell inner membrane. The chain is Putative transport protein YdiK (ydiK) from Escherichia coli (strain K12).